The sequence spans 506 residues: Histidine--tRNA ligase, mitochondrial (506 aa).

A mitochondrion-targeting transit peptide spans 1–33; that stretch reads MPQLGLLPGRAWTVLLGLLRPPPGALCIRAVRS. S67 bears the Phosphoserine mark. Residues 131 to 133, R158, Q174, D178, R327, and 331 to 332 contribute to the L-histidine site; these read DLT and YY. K444 bears the N6-acetyllysine mark.

The protein belongs to the class-II aminoacyl-tRNA synthetase family. Homodimer.

It localises to the mitochondrion. The catalysed reaction is tRNA(His) + L-histidine + ATP = L-histidyl-tRNA(His) + AMP + diphosphate + H(+). Its function is as follows. Mitochondrial aminoacyl-tRNA synthetase that catalyzes the ATP-dependent ligation of histidine to the 3'-end of its cognate tRNA, via the formation of an aminoacyl-adenylate intermediate (His-AMP). This Bos taurus (Bovine) protein is Histidine--tRNA ligase, mitochondrial (HARS2).